The chain runs to 195 residues: Transmembrane protein 239 (195 aa).

2 consecutive transmembrane segments (helical) span residues 105-125 (LWGL…HALF) and 145-171 (HLLP…LLLF).

Its subcellular location is the membrane. The protein is Transmembrane protein 239 (TMEM239) of Homo sapiens (Human).